The following is a 159-amino-acid chain: Bacterioferritin (159 aa).

The 145-residue stretch at 1–145 (MQGDPDVLRL…TQLELMDKLG (145 aa)) folds into the Ferritin-like diiron domain. Residues E18 and E51 each contribute to the Fe cation site. M52 provides a ligand contact to heme b. Fe cation-binding residues include H54, E94, E127, and H130.

The protein belongs to the bacterioferritin family. As to quaternary structure, homooligomer of 24 subunits, arranged as 12 dimers, that are packed together to form an approximately spherical molecule with a central cavity, in which large amounts of iron can be deposited. The cofactor is heme b.

It carries out the reaction 4 Fe(2+) + O2 + 4 H(+) = 4 Fe(3+) + 2 H2O. The enzyme catalyses Fe(2+)(in) = Fe(2+)(out). In terms of biological role, iron-storage protein, whose ferroxidase center binds Fe(2+), oxidizes it using dioxygen to Fe(3+), and participates in the subsequent Fe(3+) oxide mineral core formation within the central cavity of the BFR protein shell. The chain is Bacterioferritin (bfr) from Mycobacterium bovis (strain ATCC BAA-935 / AF2122/97).